A 299-amino-acid chain; its full sequence is 6-phosphogluconate dehydrogenase, NAD(+)-dependent, decarboxylating (299 aa).

Residues 7–12 (GLGRMG), 67–69 (VPA), and Asn-95 contribute to the NAD(+) site. Substrate is bound by residues Asn-95, Ser-118, and Gly-120. Lys-169 acts as the Proton acceptor in catalysis. 172-173 (HN) contacts substrate. Glu-176 functions as the Proton donor in the catalytic mechanism. The substrate site is built by Tyr-177 and Arg-268.

Belongs to the 6-phosphogluconate dehydrogenase family. In terms of assembly, homotetramer.

The enzyme catalyses 6-phospho-D-gluconate + NAD(+) = D-ribulose 5-phosphate + CO2 + NADH. It functions in the pathway carbohydrate degradation; pentose phosphate pathway. In terms of biological role, catalyzes the oxidative decarboxylation of 6-phosphogluconate to ribulose 5-phosphate and CO(2), with concomitant reduction of NAD to NADH. This chain is 6-phosphogluconate dehydrogenase, NAD(+)-dependent, decarboxylating, found in Haloferax volcanii (strain ATCC 29605 / DSM 3757 / JCM 8879 / NBRC 14742 / NCIMB 2012 / VKM B-1768 / DS2) (Halobacterium volcanii).